The primary structure comprises 107 residues: Nucleoid-associated protein AZOSEA06390 (107 aa).

It belongs to the YbaB/EbfC family. Homodimer.

It localises to the cytoplasm. The protein localises to the nucleoid. In terms of biological role, binds to DNA and alters its conformation. May be involved in regulation of gene expression, nucleoid organization and DNA protection. In Aromatoleum aromaticum (strain DSM 19018 / LMG 30748 / EbN1) (Azoarcus sp. (strain EbN1)), this protein is Nucleoid-associated protein AZOSEA06390.